A 793-amino-acid chain; its full sequence is Kinesin-like protein KIN-14C (793 aa).

The tract at residues Met-1–Phe-43 is disordered. Positions Met-1–Thr-69 are globular. Residues Ala-15 to Glu-32 show a composition bias toward basic and acidic residues. A coiled-coil region spans residues Lys-120–Arg-375. Positions Asn-431–Cys-772 constitute a Kinesin motor domain. ATP is bound at residue Gly-516–Thr-523.

Belongs to the TRAFAC class myosin-kinesin ATPase superfamily. Kinesin family. KIN-14 subfamily.

It localises to the cytoplasm. The protein localises to the cytoskeleton. It is found in the spindle. The protein resides in the phragmoplast. Its subcellular location is the chromosome. It localises to the centromere. The protein localises to the kinetochore. Functionally, kinesin that supports microtubule movement in an ATP-dependent manner and has a minus-end directed polarity. Plays a crucial role in spindle morphogenesis in male meiosis. In mitosis, is required for normal microtubule accumulation at the spindle poles during prophase and may play a role in spindle assembly during prometaphase. In Arabidopsis thaliana (Mouse-ear cress), this protein is Kinesin-like protein KIN-14C.